A 1956-amino-acid chain; its full sequence is Sodium channel protein type 10 subunit alpha (1956 aa).

At 1–125 (MELPFASVGT…FNLIRRTAIK (125 aa)) the chain is on the cytoplasmic side. Residues 31-54 (HRAAKKARTKHRGQEDKGEKPRPQ) are disordered. Residues 32 to 41 (RAAKKARTKH) show a composition bias toward basic residues. The segment covering 42-54 (RGQEDKGEKPRPQ) has biased composition (basic and acidic residues). One copy of the I repeat lies at 116–404 (FNLIRRTAIK…VTMAYEEQSQ (289 aa)). The chain crosses the membrane as a helical span at residues 126 to 149 (VSVHSWFSIFITITILVNCVCMTR). Over 150–154 (TDLPE) the chain is Extracellular. Residues 155-174 (KVEYVFTVIYTFEALIKILA) traverse the membrane as a helical segment. Residues 175-187 (RGFCLNEFTYLRD) are Cytoplasmic-facing. Residues 188–206 (PWNWLDFSVITLAYVGAAI) traverse the membrane as a helical segment. The Extracellular portion of the chain corresponds to 207 to 212 (DLRGIS). A helical; Voltage-sensor membrane pass occupies residues 213–232 (GLRTFRVLRALKTVSVIPGL). Residues 233–248 (KVIVGALIHSVRKLAD) lie on the Cytoplasmic side of the membrane. A helical transmembrane segment spans residues 249–272 (VTILTVFCLSVFALVGLQLFKGNL). The Extracellular portion of the chain corresponds to 273–340 (KNKCIRNGTD…PDFNYTSFDS (68 aa)). A disulfide bridge connects residues cysteine 276 and cysteine 318. N-linked (GlcNAc...) asparagine glycosylation is found at asparagine 279, asparagine 288, asparagine 311, and asparagine 334. Positions 341-365 (FAWAFLSLFRLMTQDSWERLYQQTL) form an intramembrane region, pore-forming. Over 366-372 (RASGKMY) the chain is Extracellular. A helical membrane pass occupies residues 373 to 398 (MVFFVLVIFLGSFYLVNLILAVVTMA). The Cytoplasmic portion of the chain corresponds to 399–658 (YEEQSQATIA…KWRKFKMALF (260 aa)). Phosphoserine is present on residues serine 440, serine 443, serine 466, and serine 478. Over residues 441–453 (LQSHSGSPLASKN) the composition is skewed to polar residues. Disordered regions lie at residues 441 to 484 (LQSH…YNQR) and 537 to 581 (LLGR…AGAP). Residues 475–484 (SPQSDPYNQR) show a composition bias toward polar residues. 2 positions are modified to phosphoserine: serine 611 and serine 614. Residues 646 to 910 (CCPKWRKFKM…EDDGEVNNLQ (265 aa)) form an II repeat. Residues 659 to 683 (ELVTDPFAELTITLCIVVNTVFMAM) traverse the membrane as a helical segment. Residues 684-694 (EHYPMTDAFDA) lie on the Extracellular side of the membrane. The chain crosses the membrane as a helical span at residues 695 to 718 (MLQAGNIVFTVFFTMEMAFKIIAF). The Cytoplasmic portion of the chain corresponds to 719-726 (DPYYYFQK). A helical transmembrane segment spans residues 727–746 (KWNIFDCVIVTVSLLELSAS). Over 747 to 752 (KKGSLS) the chain is Extracellular. The chain crosses the membrane as a helical; Voltage-sensor span at residues 753-772 (VLRTFRLLRVFKLAKSWPTL). Topologically, residues 773–788 (NTLIKIIGNSVGALGN) are cytoplasmic. A helical membrane pass occupies residues 789 to 809 (LTFILAIIVFIFALVGKQLLS). Over 810-833 (EDYGCRKDGVSVWNGEKLRWHMCD) the chain is Extracellular. Residues 834–854 (FFHSFLVVFRILCGEWIENMW) constitute an intramembrane region (pore-forming). Topologically, residues 855 to 863 (VCMEVSQKS) are extracellular. Cysteine 856 and cysteine 865 are joined by a disulfide. Residues 864-889 (ICLILFLTVMVLGNLVVLNLFIALLL) form a helical membrane-spanning segment. Topologically, residues 890-1148 (NSFSADNLTA…GWQVRKTCYR (259 aa)) are cytoplasmic. The segment at 1008 to 1094 (DELEEDMEQA…SEGSTVDCPD (87 aa)) is disordered. Residues 1141-1450 (QVRKTCYRIV…KKYYNAMKKL (310 aa)) form an III repeat. A helical membrane pass occupies residues 1149-1172 (IVEHSWFESFIIFMILLSSGALAF). Topologically, residues 1173–1185 (EDNYLEEKPRVKS) are extracellular. A helical membrane pass occupies residues 1186-1211 (VLEYTDRVFTFIFVFEMLLKWVAYGF). At 1212–1217 (KKYFTN) the chain is on the cytoplasmic side. Residues 1218-1239 (AWCWLDFLIVNISLTSLIAKIL) traverse the membrane as a helical segment. The Extracellular segment spans residues 1240–1243 (EYSD). Residues 1244–1265 (VASIKALRTLRALRPLRALSRF) form a helical; Voltage-sensor membrane-spanning segment. The Cytoplasmic portion of the chain corresponds to 1266 to 1284 (EGMRVVVDALVGAIPSIMN). Residues 1285 to 1312 (VLLVCLIFWLIFSIMGVNLFAGKFSKCV) form a helical membrane-spanning segment. Over 1313–1354 (DTRNNPFSNVNSTMVNNKSECHNQNSTGHFFWVNVKVNFDNV) the chain is Extracellular. Residues asparagine 1323, asparagine 1329, and asparagine 1337 are each glycosylated (N-linked (GlcNAc...) asparagine). Positions 1355–1376 (AMGYLALLQVATFKGWMDIMYA) form an intramembrane region, pore-forming. Topologically, residues 1377-1392 (AVDSGEINSQPNWENN) are extracellular. The chain crosses the membrane as a helical span at residues 1393–1419 (LYMYLYFVVFIIFGGFFTLNLFVGVII). The Cytoplasmic portion of the chain corresponds to 1420–1472 (DNFNQQKKKLGGQDIFMTEEQKKYYNAMKKLGSKKPQKPIPRPLNKYQGFVFD). Position 1452 is a phosphoserine; by PKC (serine 1452). One copy of the IV repeat lies at 1459–1758 (IPRPLNKYQG…WEKFDPEATQ (300 aa)). A helical membrane pass occupies residues 1473–1496 (IVTRQAFDIIIMVLICLNMITMMV). Over 1497 to 1507 (ETDEQGEEKTK) the chain is Extracellular. Residues 1508–1531 (VLGRINQFFVAVFTGECVMKMFAL) form a helical membrane-spanning segment. Residues 1532 to 1537 (RQYYFT) lie on the Cytoplasmic side of the membrane. Residues 1538–1561 (NGWNVFDFIVVILSIGSLLFSAIL) traverse the membrane as a helical segment. Over 1562–1573 (KSLENYFSPTLF) the chain is Extracellular. Residues 1574–1595 (RVIRLARIGRILRLIRAAKGIR) form a helical; Voltage-sensor membrane-spanning segment. The Cytoplasmic portion of the chain corresponds to 1596–1610 (TLLFALMMSLPALFN). The helical transmembrane segment at 1611 to 1633 (IGLLLFLVMFIYSIFGMASFANV) threads the bilayer. At 1634 to 1647 (VDEAGIDDMFNFKT) the chain is on the extracellular side. An intramembrane region (pore-forming) is located at residues 1648–1670 (FGNSMLCLFQITTSAGWDGLLSP). Over 1671 to 1698 (ILNTGPPYCDPNLPNSNGSRGNCGSPAV) the chain is Extracellular. A glycan (N-linked (GlcNAc...) asparagine) is linked at asparagine 1687. A helical transmembrane segment spans residues 1699 to 1723 (GIIFFTTYIIISFLIVVNMYIAVIL). Over 1724-1956 (ENFNVATEES…AKEGNSPGPQ (233 aa)) the chain is Cytoplasmic. Residues 1852 to 1881 (EDLSATVIQKAYRSYMLHRSLTLSNTLHVP) enclose the IQ domain. The interval 1906–1956 (DKSETASATSFPPSYDSVTRGLSDRANINPSSSMQNEDEVAAKEGNSPGPQ) is disordered. The span at 1931–1940 (ANINPSSSMQ) shows a compositional bias: polar residues.

Belongs to the sodium channel (TC 1.A.1.10) family. Nav1.8/SCN10A subfamily. The channel consists of an ion conducting pore forming alpha-subunit regulated by one or more associated auxiliary subunits SCN1B, SCN2B and SCN3B; electrophysiological properties may vary depending on the type of the associated beta subunits. Found in a number of complexes with PRX, DYNLT1 and PDZD2. Interacts with proteins such as FSTL1, PRX, DYNLT1, PDZD2, S100A10 and many others. Interacts with NEDD4 and NEDD4L. Post-translationally, ubiquitinated by NEDD4L; which promotes its endocytosis. Phosphorylation at Ser-1452 by PKC in a highly conserved cytoplasmic loop slows inactivation of the sodium channel and reduces peak sodium currents. In terms of processing, lacks the cysteine which covalently binds the conotoxin GVIIJ. This cysteine (position 815) is speculated in other sodium channel subunits alpha to be implied in covalent binding with the sodium channel subunit beta-2 or beta-4. In terms of tissue distribution, expressed in dorsal root ganglia, trigeminal ganglia, nodose ganglia and sciatic nerve.

Its subcellular location is the cell membrane. The enzyme catalyses Na(+)(in) = Na(+)(out). Its function is as follows. Tetrodotoxin-resistant channel that mediates the voltage-dependent sodium ion permeability of excitable membranes. Assuming opened or closed conformations in response to the voltage difference across the membrane, the protein forms a sodium-selective channel through which sodium ions may pass in accordance with their electrochemical gradient. Plays a role in neuropathic pain mechanisms. The protein is Sodium channel protein type 10 subunit alpha of Rattus norvegicus (Rat).